The primary structure comprises 764 residues: Complement factor B (764 aa).

The first 25 residues, 1-25 (MGSNLSPQLCLMPFILGLLSGGVTT), serve as a signal peptide directing secretion. 3 consecutive Sushi domains span residues 35 to 100 (GSCS…ECRA), 101 to 160 (IHCP…ICDN), and 163 to 220 (GYCS…SCQD). 6 cysteine pairs are disulfide-bonded: cysteine 37–cysteine 76, cysteine 62–cysteine 98, cysteine 103–cysteine 145, cysteine 131–cysteine 158, cysteine 165–cysteine 205, and cysteine 191–cysteine 218. 2 N-linked (GlcNAc...) asparagine glycosylation sites follow: asparagine 122 and asparagine 142. The 200-residue stretch at 270 to 469 (NIYLVLDGSD…NLEDVFYQMI (200 aa)) folds into the VWFA domain. Mg(2+) is bound by residues serine 278 and serine 280. Asparagine 285 carries N-linked (GlcNAc...) asparagine glycosylation. Threonine 353 serves as a coordination point for Mg(2+). The N-linked (GlcNAc...) asparagine glycan is linked to asparagine 378. In terms of domain architecture, Peptidase S1 spans 477 to 757 (LCGMVWEHRK…VLPWLKEKLQ (281 aa)). 5 disulfide bridges follow: cysteine 478/cysteine 596, cysteine 511/cysteine 527, cysteine 599/cysteine 615, cysteine 656/cysteine 682, and cysteine 695/cysteine 725. Catalysis depends on charge relay system residues histidine 526 and aspartate 576. Serine 699 functions as the Charge relay system in the catalytic mechanism.

This sequence belongs to the peptidase S1 family. As to quaternary structure, monomer. Interacts with complement C3b; this interaction is dependent on the presence of Mg(2+). In terms of assembly, catalytic component of the C3 convertase of the alternative complement pathway, also named C3bBb, composed of complement factor B Bb and complement C3b. Catalytic component of the C5 convertase of the alternative complement pathway, also named C3bBb3b, composed of complement factor B Bb and additional molecules of complement C3b. Interacts to CFP; this interaction contributes to the stabilization of the active C3-convertase enzyme complex. Requires Mg(2+) as cofactor. The cofactor is Mn(2+). Post-translationally, cleaved by CFD following activation of the alternative complement system, generating Ba and Bb chains. Cleavage and activation takes place when CFB is already associated with complement C3b.

The protein resides in the secreted. It localises to the cell surface. The catalysed reaction is Cleavage of Arg-|-Ser bond in complement component C3 alpha-chain to yield C3a and C3b, and Arg-|-Xaa bond in complement component C5 alpha-chain to yield C5a and C5b.. Its function is as follows. Precursor of the catalytic component of the C3 and C5 convertase complexes of the alternative pathway of the complement system, a cascade of proteins that leads to phagocytosis and breakdown of pathogens and signaling that strengthens the adaptive immune system. The alternative complement pathway acts as an amplification loop that enhances other complement pathways (classical, lectin and GZMK) by promoting formation of additional C3 and C5 convertases. CFB is cleaved and activated by CFD to generate Ba and Bb chains; Bb chain constituting the catalytic component of the C3 and C5 convertases. Functionally, serine protease component of the complement C3 and C5 convertase complexes of the alternative complement pathway. Following cleavage and activation by factor D (CFD), forms the C3 convertase together with complement C3b. As part of the C3 convertase, cleaves and activates C3 into C3a anaphylatoxin and C3b opsonin, the next components of the complement pathways. When an additional complement C3b molecule binds to the C3 convertase, forms the C5 convertase, which cleaves and activates C5 into C5a anaphylatoxin and C5b component of the membrane attack complex. In terms of biological role, involved in proliferation and differentiation of preactivated B-lymphocytes, rapid spreading of peripheral blood monocytes, stimulation of lymphocyte blastogenesis and lysis of erythrocytes. This chain is Complement factor B (CFB), found in Gorilla gorilla gorilla (Western lowland gorilla).